We begin with the raw amino-acid sequence, 238 residues long: MAADGQCSLPASWRPVTLTHVEYPAGDLSGHLLAYLSLSPVFVIVGFVTLIIFKRELHTISFLGGLALNEGVNWLIKNVIQEPRPCGGPHTAVGTKYGMPSSHSQFMWFFSVYSFLFLYLRMHQTNNARFLDLLWRHVLSLGLLAAAFLVSYSRVYLLYHTWSQVLYGGIAGGLMAVAWFIFTQEVLTPLFPRIAAWPISEFFLIRDTSLIPNVLWFEYTVTRAEARNRQRKLGTKLQ.

4 consecutive transmembrane segments (helical) span residues 33–53 (LAYLSLSPVFVIVGFVTLIIF), 100–120 (PSSHSQFMWFFSVYSFLFLYL), 130–150 (FLDLLWRHVLSLGLLAAAFLV), and 162–182 (WSQVLYGGIAGGLMAVAWFIF).

This sequence belongs to the dolichyldiphosphatase family.

The protein resides in the endoplasmic reticulum membrane. It catalyses the reaction a di-trans,poly-cis-dolichyl diphosphate + H2O = a di-trans,poly-cis-dolichyl phosphate + phosphate + H(+). It participates in protein modification; protein glycosylation. Required for efficient N-glycosylation. Necessary for maintaining optimal levels of dolichol-linked oligosaccharides. Hydrolyzes dolichyl pyrophosphate at a very high rate and dolichyl monophosphate at a much lower rate. Does not act on phosphatidate. The sequence is that of Dolichyldiphosphatase 1 (DOLPP1) from Callithrix jacchus (White-tufted-ear marmoset).